The chain runs to 805 residues: Probable exo-1,4-beta-xylosidase xlnD (805 aa).

The signal sequence occupies residues 1–17 (MAVAALALLALLPQALG). N-linked (GlcNAc...) asparagine glycans are attached at residues Asn20, Asn115, Asn140, Asn235, and Asn244. Asp308 is a catalytic residue. N-linked (GlcNAc...) asparagine glycosylation is found at Asn350, Asn383, Asn405, Asn434, Asn445, Asn486, Asn490, Asn622, Asn653, Asn667, Asn689, and Asn711.

Belongs to the glycosyl hydrolase 3 family.

The protein localises to the secreted. The catalysed reaction is Hydrolysis of (1-&gt;4)-beta-D-xylans, to remove successive D-xylose residues from the non-reducing termini.. The protein operates within glycan degradation; xylan degradation. Xylan 1,4-beta-xylosidase involved in the hydrolysis of xylan, a major structural heterogeneous polysaccharide found in plant biomass representing the second most abundant polysaccharide in the biosphere, after cellulose. The polypeptide is Probable exo-1,4-beta-xylosidase xlnD (xlnD) (Aspergillus aculeatus).